Here is a 140-residue protein sequence, read N- to C-terminus: Nucleoside diphosphate kinase (140 aa).

ATP contacts are provided by Lys10, Phe58, Arg86, Thr92, Arg103, and Asn113. Residue His116 is the Pros-phosphohistidine intermediate of the active site.

The protein belongs to the NDK family. In terms of assembly, homotetramer. The cofactor is Mg(2+).

The protein resides in the cytoplasm. It carries out the reaction a 2'-deoxyribonucleoside 5'-diphosphate + ATP = a 2'-deoxyribonucleoside 5'-triphosphate + ADP. The enzyme catalyses a ribonucleoside 5'-diphosphate + ATP = a ribonucleoside 5'-triphosphate + ADP. Its function is as follows. Major role in the synthesis of nucleoside triphosphates other than ATP. The ATP gamma phosphate is transferred to the NDP beta phosphate via a ping-pong mechanism, using a phosphorylated active-site intermediate. This Anaplasma phagocytophilum (strain HZ) protein is Nucleoside diphosphate kinase.